We begin with the raw amino-acid sequence, 215 residues long: Probable transaldolase (215 aa).

The Schiff-base intermediate with substrate role is filled by K83.

Belongs to the transaldolase family. Type 3B subfamily.

It is found in the cytoplasm. The enzyme catalyses D-sedoheptulose 7-phosphate + D-glyceraldehyde 3-phosphate = D-erythrose 4-phosphate + beta-D-fructose 6-phosphate. It functions in the pathway carbohydrate degradation; pentose phosphate pathway; D-glyceraldehyde 3-phosphate and beta-D-fructose 6-phosphate from D-ribose 5-phosphate and D-xylulose 5-phosphate (non-oxidative stage): step 2/3. In terms of biological role, transaldolase is important for the balance of metabolites in the pentose-phosphate pathway. In Clostridium perfringens (strain SM101 / Type A), this protein is Probable transaldolase.